The primary structure comprises 127 residues: Phosphoribosyl-AMP cyclohydrolase (127 aa).

Position 78 (Asp78) interacts with Mg(2+). Residue Cys79 participates in Zn(2+) binding. Positions 80 and 82 each coordinate Mg(2+). Zn(2+)-binding residues include Cys95 and Cys102.

It belongs to the PRA-CH family. As to quaternary structure, homodimer. Mg(2+) serves as cofactor. Requires Zn(2+) as cofactor.

It is found in the cytoplasm. It catalyses the reaction 1-(5-phospho-beta-D-ribosyl)-5'-AMP + H2O = 1-(5-phospho-beta-D-ribosyl)-5-[(5-phospho-beta-D-ribosylamino)methylideneamino]imidazole-4-carboxamide. It functions in the pathway amino-acid biosynthesis; L-histidine biosynthesis; L-histidine from 5-phospho-alpha-D-ribose 1-diphosphate: step 3/9. In terms of biological role, catalyzes the hydrolysis of the adenine ring of phosphoribosyl-AMP. In Salinibacter ruber (strain DSM 13855 / M31), this protein is Phosphoribosyl-AMP cyclohydrolase.